Consider the following 355-residue polypeptide: Phenylalanine--tRNA ligase alpha subunit (355 aa).

E273 is a Mg(2+) binding site.

This sequence belongs to the class-II aminoacyl-tRNA synthetase family. Phe-tRNA synthetase alpha subunit type 1 subfamily. Tetramer of two alpha and two beta subunits. Mg(2+) serves as cofactor.

The protein resides in the cytoplasm. The enzyme catalyses tRNA(Phe) + L-phenylalanine + ATP = L-phenylalanyl-tRNA(Phe) + AMP + diphosphate + H(+). This chain is Phenylalanine--tRNA ligase alpha subunit, found in Bifidobacterium longum subsp. infantis (strain ATCC 15697 / DSM 20088 / JCM 1222 / NCTC 11817 / S12).